The primary structure comprises 1439 residues: Histone-lysine N-methyltransferase NSD3 (1439 aa).

The tract at residues 121-151 is disordered; the sequence is PHEILEKPSPPQPPPPPSVPQTVIPKKTGSP. Positions 128–139 are enriched in pro residues; it reads PSPPQPPPPPSV. The residue at position 150 (serine 150) is a Phosphoserine. Residues 154–157 carry the KIKL motif; it reads KLKI. The segment at 181–247 is disordered; that stretch reads QASEHTKSKH…PREEPVLKEA (67 aa). Positions 187 to 201 are enriched in basic residues; that stretch reads KSKHESRKEKRKKSN. Positions 202–244 are enriched in basic and acidic residues; that stretch reads RHESSRSEERRSHKIPKLEPEGQNRPNERVDTAPEKPREEPVL. Residues lysine 218 and lysine 245 each participate in a glycyl lysine isopeptide (Lys-Gly) (interchain with G-Cter in SUMO2) cross-link. Residues 270-333 form the PWWP 1 domain; it reads VGDLVWSKVG…EKRVREYKGH (64 aa). 2 disordered regions span residues 344–367 and 401–466; these read AKQASNHSEKQKIRKPRPQRERAQ and EASS…PPPV. Polar residues-rich tracts occupy residues 401-413 and 425-445; these read EASSQAKKNVTSK and VLNSQPEQTNAGEVASSQSST. Lysine 413 is covalently cross-linked (Glycyl lysine isopeptide (Lys-Gly) (interchain with G-Cter in SUMO2)). Serine 457 is modified (phosphoserine). Residues lysine 502 and lysine 532 each participate in a glycyl lysine isopeptide (Lys-Gly) (interchain with G-Cter in SUMO2) cross-link. The segment at 540-695 is disordered; sequence QDRLIISSPS…VDSSLSRRGV (156 aa). The span at 546-568 shows a compositional bias: polar residues; that stretch reads SSPSQRSEKPAQSASSPEATSGS. A compositionally biased stretch (basic and acidic residues) spans 583–595; sequence TRSESEKSAEVVP. Serine 585, serine 587, and serine 590 each carry phosphoserine. Residue lysine 628 forms a Glycyl lysine isopeptide (Lys-Gly) (interchain with G-Cter in SUMO2) linkage. A compositionally biased stretch (polar residues) spans 637-648; sequence STDVETASCTYR. The residue at position 655 (serine 655) is a Phosphoserine. A compositionally biased stretch (low complexity) spans 670–691; that stretch reads DSPSATADADASDAQSVDSSLS. PHD-type zinc fingers lie at residues 701–748, 749–805, and 862–955; these read DTVC…CETG, QHPC…CSME, and VGFC…CKAG. Lysine 790 is modified (N6-acetyllysine). The 66-residue stretch at 960 to 1025 folds into the PWWP 2 domain; it reads YKQIVWVKLG…QGRVFPYVEG (66 aa). The stretch at 1036-1065 forms a coiled coil; the sequence is INKTFKKALEEAAKRFQELKAQRESKEALE. The AWS domain maps to 1096–1146; sequence SEIPRCNCKPGDENPCGLESQCLNRMSQYECHPQVCPAGDRCQNQCFTKRL. One can recognise an SET domain in the interval 1148–1265; sequence PDAEVIKTER…AGMELTFNYN (118 aa). Residue lysine 1154 forms a Glycyl lysine isopeptide (Lys-Gly) (interchain with G-Cter in SUMO2) linkage. Residues 1272 to 1288 form the Post-SET domain; it reads GRTVCHCGADNCSGFLG. The PHD-type 4; atypical zinc finger occupies 1323 to 1370; it reads EDYCFQCGDGGELVMCDKKDCPKAYHLLCLNLTQPPHGKWECPWHRCD.

Belongs to the class V-like SAM-binding methyltransferase superfamily. Histone-lysine methyltransferase family. SET2 subfamily. In terms of assembly, interacts with BRD4. Interacts (via KIKL motif) with BRD3 (via NET domain).

It localises to the nucleus. The protein localises to the chromosome. The enzyme catalyses L-lysyl(4)-[histone H3] + 2 S-adenosyl-L-methionine = N(6),N(6)-dimethyl-L-lysyl(4)-[histone H3] + 2 S-adenosyl-L-homocysteine + 2 H(+). It carries out the reaction L-lysyl(27)-[histone H3] + 2 S-adenosyl-L-methionine = N(6),N(6)-dimethyl-L-lysyl(27)-[histone H3] + 2 S-adenosyl-L-homocysteine + 2 H(+). In terms of biological role, histone methyltransferase. Preferentially dimethylates 'Lys-4' and 'Lys-27' of histone H3 forming H3K4me2 and H3K27me2. H3 'Lys-4' methylation represents a specific tag for epigenetic transcriptional activation, while 'Lys-27' is a mark for transcriptional repression. This chain is Histone-lysine N-methyltransferase NSD3 (Nsd3), found in Mus musculus (Mouse).